Here is a 282-residue protein sequence, read N- to C-terminus: Trihydroxynaphthalene reductase (282 aa).

NADP(+) is bound by residues I41, N114, and R147. Catalysis depends on proton donor residues S164 and Y178. The NADP(+) site is built by Y178, K182, I211, and T213. Catalysis depends on K182, which acts as the Lowers pKa of active site Tyr.

This sequence belongs to the short-chain dehydrogenases/reductases (SDR) family. In terms of assembly, homotetramer.

Its pathway is pigment biosynthesis; melanin biosynthesis. Its function is as follows. Catalyzes the NADPH-dependent reduction of 1,3,8-trihydroxynaphthalene (T3HN) into (-)-vermelone. Essential for appressorial penetration of colletotrichum lagenarium. The chain is Trihydroxynaphthalene reductase (THR1) from Colletotrichum orbiculare (strain 104-T / ATCC 96160 / CBS 514.97 / LARS 414 / MAFF 240422) (Cucumber anthracnose fungus).